Here is a 489-residue protein sequence, read N- to C-terminus: Lysine--tRNA ligase (489 aa).

Mg(2+) is bound by residues E399 and E406.

Belongs to the class-II aminoacyl-tRNA synthetase family. In terms of assembly, homodimer. Requires Mg(2+) as cofactor.

The protein resides in the cytoplasm. It carries out the reaction tRNA(Lys) + L-lysine + ATP = L-lysyl-tRNA(Lys) + AMP + diphosphate. This Roseiflexus sp. (strain RS-1) protein is Lysine--tRNA ligase.